We begin with the raw amino-acid sequence, 485 residues long: Glutamyl-tRNA(Gln) amidotransferase subunit A (485 aa).

Active-site charge relay system residues include K79 and S154. Catalysis depends on S178, which acts as the Acyl-ester intermediate.

It belongs to the amidase family. GatA subfamily. Heterotrimer of A, B and C subunits.

It carries out the reaction L-glutamyl-tRNA(Gln) + L-glutamine + ATP + H2O = L-glutaminyl-tRNA(Gln) + L-glutamate + ADP + phosphate + H(+). Its function is as follows. Allows the formation of correctly charged Gln-tRNA(Gln) through the transamidation of misacylated Glu-tRNA(Gln) in organisms which lack glutaminyl-tRNA synthetase. The reaction takes place in the presence of glutamine and ATP through an activated gamma-phospho-Glu-tRNA(Gln). The protein is Glutamyl-tRNA(Gln) amidotransferase subunit A of Clostridium botulinum (strain Okra / Type B1).